Consider the following 538-residue polypeptide: Cytochrome P450 monooxygenase claO (538 aa).

2 consecutive transmembrane segments (helical) span residues 7-27 (IGAFNILVFLIFLWLLSKLVG) and 222-242 (INPSYFSMVIFLLALVFPILL). C475 contributes to the heme binding site.

This sequence belongs to the cytochrome P450 family. It depends on heme as a cofactor.

The protein localises to the membrane. It functions in the pathway secondary metabolite biosynthesis; terpenoid biosynthesis. Its function is as follows. Cytochrome P450 monooxygenase; part of the gene cluster that mediates the biosynthesis of clavilactone A, a meroterpenoid that features a unique benzo-fused ten-membered carbocyclic ring unit with an alpha,beta-epoxy-gamma-lactone moiety, forming an intriguing 10/5/3 tricyclic nested skeleton. Cytochrome P450 monooxygenases claO, claP, claQ, claU, and claW are close orthologs, suggesting that a redundant function or pseudogenes are present in the cla cluster. These monoxygenases are not involved in clavilactone A biosynthesis nor in its modification. ClaR, ClaS and ClaT are sufficient to produce clavilactone A. The biosynthesis begins with the prenyltransferase claS that transfers geranyl pyrophosphate (GPP) to hydroquinone to produces geranylhydroquinone. The cytochrome P450 monooxygenase claR then catalyzes the diradical coupling reaction between the intramolecular hydroquinone and allyl moieties to form the benzo-fused ten-membered carbocyclic ring unit of wigantol. Finally the cytochrome P450 monooxygenase claT exquisitely and stereoselectively assembles the alpha,beta-epoxy-gamma-lactone moiety, producing clavilactone A via arnebinol A. This is Cytochrome P450 monooxygenase claO from Ampulloclitocybe clavipes (Club foot).